A 78-amino-acid polypeptide reads, in one-letter code: MARVCQVTGKAPMVGNNVSHANNKTKRRFLPNLQNRRFWSESENRWIRLRVSNAALRTIDKKGIDVVVSELRARGEKV.

This sequence belongs to the bacterial ribosomal protein bL28 family.

The sequence is that of Large ribosomal subunit protein bL28 from Aromatoleum aromaticum (strain DSM 19018 / LMG 30748 / EbN1) (Azoarcus sp. (strain EbN1)).